We begin with the raw amino-acid sequence, 310 residues long: Homoserine kinase (310 aa).

91 to 101 is a binding site for ATP; it reads PIGSGLGSSAC.

It belongs to the GHMP kinase family. Homoserine kinase subfamily.

The protein resides in the cytoplasm. It catalyses the reaction L-homoserine + ATP = O-phospho-L-homoserine + ADP + H(+). The protein operates within amino-acid biosynthesis; L-threonine biosynthesis; L-threonine from L-aspartate: step 4/5. In terms of biological role, catalyzes the ATP-dependent phosphorylation of L-homoserine to L-homoserine phosphate. The polypeptide is Homoserine kinase (Escherichia coli O6:K15:H31 (strain 536 / UPEC)).